A 272-amino-acid chain; its full sequence is Plastid division protein PDV1 (272 aa).

Residues 1 to 206 (MGEMEIEEIE…KRALGFNHVK (206 aa)) are Cytoplasmic-facing. The interval 40–61 (KPSNRSEKRKNPHGNSGEDKRP) is disordered. Positions 78-102 (IQEAKSLNAIRTALENLEDQLEFFH) form a coiled coil. A helical transmembrane segment spans residues 207–225 (GVLGNAAIFAISVVAMLHL). Over 226-272 (HQVATSEHHLQKKEDRFYRSQQRKTYGRDKSSADRSLDHLDVMMARG) the chain is Chloroplast intermembrane.

In terms of assembly, interacts (via C-terminus) with CDP1/PARC6 (via C-terminus). Interacts with ARC5/DRP5B. Expressed in young developing leaves, root tips, shoot apices, and flower buds (sepals, petals, stamens, and pistils), but not in developed tissues.

It localises to the plastid. Its subcellular location is the chloroplast outer membrane. Its function is as follows. Component of the plastid division machinery. Required to mediate the dissociation of ARC5/DRP5B from plastid outer envelope membranes (OEMs) at the midplastid constriction site in the cytoplasm, thus triggering ARC5/DRP5B ring turnover at the chloroplast division site. Binding to phosphatidylinositol 4-phosphate (PI4P) modulates negatively chloroplast division. The polypeptide is Plastid division protein PDV1 (Arabidopsis thaliana (Mouse-ear cress)).